A 541-amino-acid chain; its full sequence is Atlastin-3 (541 aa).

Positions 1-22 (MLSPQRTAAVASRGAGDAMENG) are disordered. Positions 1-25 (MLSPQRTAAVASRGAGDAMENGKPG) are N-terminal hypervariable region (HVR). Residues 1–445 (MLSPQRTAAV…NVFSTFRTPA (445 aa)) lie on the Cytoplasmic side of the membrane. One can recognise a GB1/RHD3-type G domain in the interval 57–306 (DLDVVVVSVA…LIPYVLNPSK (250 aa)). Residues Arg-70, Lys-71, Gly-72, Lys-73, Ser-74, Phe-75, and Arg-109 each contribute to the GDP site. Asp-142 serves as a coordination point for Mg(2+). GDP contacts are provided by Arg-213, Asp-214, Val-272, and Ser-275. The segment at 344-434 (MLQATAANNL…YENFCKHNGS (91 aa)) is 3HB (three-helix bundle) domain. Residue Lys-391 is modified to N6-acetyllysine. The helical transmembrane segment at 446 to 466 (VLFTGIAVLYIASGLTGFIGL) threads the bilayer. Glu-467 is a topological domain (lumenal). A helical membrane pass occupies residues 468 to 488 (VVAQLFNCMVGLLLIALLTWG). Residues 489–541 (YIRYSGQYLELGGAIDSGAAYVLEQASSHIGNSTQAAVRDAIAGRPPADKKSQ) lie on the Cytoplasmic side of the membrane.

It belongs to the TRAFAC class dynamin-like GTPase superfamily. GB1/RHD3 GTPase family. GB1 subfamily. Monomeric and homodimeric. The homodimer, transiently formed by two molecules on opposing membranes, is the active form mediating ER membrane fusion. Interacts with ZFYVE27; both proteins are involved in endoplasmic reticulum tubular network organization. Interacts with REEP5; both proteins are involved in endoplasmic reticulum tubular network organization.

Its subcellular location is the endoplasmic reticulum membrane. It catalyses the reaction GTP + H2O = GDP + phosphate + H(+). Its function is as follows. Atlastin-3 (ATL3) is a membrane-anchored GTPase that mediates the GTP-dependent fusion of endoplasmic reticulum (ER) membranes, maintaining the continuous ER network. It facilitates the formation of three-way junctions where ER tubules intersect. Two atlastin-3 on neighboring ER tubules bind GTP and form loose homodimers through the GB1/RHD3-type G domains and 3HB regions. Upon GTP hydrolysis, the 3HB regions tighten, pulling the membranes together to drive their fusion. After fusion, the homodimer disassembles upon release of inorganic phosphate (Pi). Subsequently, GDP dissociates, resetting the monomers to a conformation ready for a new fusion cycle. The chain is Atlastin-3 from Rattus norvegicus (Rat).